We begin with the raw amino-acid sequence, 160 residues long: Major strawberry allergen Fra a 1-B (160 aa).

This sequence belongs to the BetVI family. In terms of assembly, monomer.

This is Major strawberry allergen Fra a 1-B from Fragaria ananassa (Strawberry).